The chain runs to 291 residues: Elongation factor Ts (291 aa).

Residues T81–V84 form an involved in Mg(2+) ion dislocation from EF-Tu region. Residues E271–S291 form a disordered region.

Belongs to the EF-Ts family.

It is found in the cytoplasm. Associates with the EF-Tu.GDP complex and induces the exchange of GDP to GTP. It remains bound to the aminoacyl-tRNA.EF-Tu.GTP complex up to the GTP hydrolysis stage on the ribosome. The sequence is that of Elongation factor Ts from Halorhodospira halophila (strain DSM 244 / SL1) (Ectothiorhodospira halophila (strain DSM 244 / SL1)).